The following is a 1637-amino-acid chain: Acrosomal protein KIAA1210 (1637 aa).

10 disordered regions span residues 44 to 121, 141 to 293, 341 to 404, 438 to 759, 865 to 896, 935 to 975, 1017 to 1057, 1090 to 1137, 1182 to 1238, and 1539 to 1558; these read RFSS…LSIS, RTTT…KNEW, PTTT…KKKD, VCGE…SQSE, PKLP…EGST, SKYS…FQPL, LQPW…IPSQ, FPFQ…SRRA, SQTI…SKSF, and NKGD…PAFS. Basic residues predominate over residues 103-114; the sequence is HRSKSLKIKSQR. Over residues 141–156 the composition is skewed to low complexity; the sequence is RTTTTFRRRSSQCSST. Residues 170 to 190 are compositionally biased toward polar residues; the sequence is SESSTQQFSGFSTPATSQGCL. The span at 229 to 249 shows a compositional bias: basic and acidic residues; the sequence is AKEKTTTKTKEAEQGEQKVDS. Positions 250 to 261 are enriched in low complexity; sequence TELSSQEQSSKT. Residues 341-353 show a composition bias toward polar residues; that stretch reads PTTTEAEVTTVQK. Residues 355–374 are compositionally biased toward basic and acidic residues; it reads PSDKGDVERELADIDVEAQK. A compositionally biased stretch (low complexity) spans 508-526; that stretch reads TGETSSDSKSTSEYESSSE. Positions 550–572 are enriched in acidic residues; that stretch reads ADDEEDGDDEKEEKDNDDDDEEN. Low complexity predominate over residues 689 to 698; it reads DLSSSEQEQQ. 5 stretches are compositionally biased toward polar residues: residues 745–759, 879–896, 935–956, 964–975, and 1017–1030; these read SPTQ…SQSE, GKQS…EGST, SKYS…STSA, SQPSVTPKFQPL, and LQPW…QVSV.

In terms of assembly, interacts with TOP2B. In terms of tissue distribution, predominantly expressed in testis (at protein level).

It is found in the cytoplasmic vesicle. The protein localises to the secretory vesicle. It localises to the acrosome. In Mus musculus (Mouse), this protein is Acrosomal protein KIAA1210.